We begin with the raw amino-acid sequence, 309 residues long: Aspartate carbamoyltransferase catalytic subunit (309 aa).

Positions 55 and 56 each coordinate carbamoyl phosphate. Lys-85 contributes to the L-aspartate binding site. Carbamoyl phosphate is bound by residues Arg-106, His-135, and Gln-138. Residues Arg-168 and Arg-230 each coordinate L-aspartate. Carbamoyl phosphate contacts are provided by Leu-268 and Pro-269.

This sequence belongs to the aspartate/ornithine carbamoyltransferase superfamily. ATCase family. In terms of assembly, heterododecamer (2C3:3R2) of six catalytic PyrB chains organized as two trimers (C3), and six regulatory PyrI chains organized as three dimers (R2).

It carries out the reaction carbamoyl phosphate + L-aspartate = N-carbamoyl-L-aspartate + phosphate + H(+). Its pathway is pyrimidine metabolism; UMP biosynthesis via de novo pathway; (S)-dihydroorotate from bicarbonate: step 2/3. In terms of biological role, catalyzes the condensation of carbamoyl phosphate and aspartate to form carbamoyl aspartate and inorganic phosphate, the committed step in the de novo pyrimidine nucleotide biosynthesis pathway. The sequence is that of Aspartate carbamoyltransferase catalytic subunit from Wigglesworthia glossinidia brevipalpis.